A 282-amino-acid chain; its full sequence is tRNA pseudouridine synthase A (282 aa).

The active-site Nucleophile is D61. Y119 lines the substrate pocket.

Belongs to the tRNA pseudouridine synthase TruA family. Homodimer.

The enzyme catalyses uridine(38/39/40) in tRNA = pseudouridine(38/39/40) in tRNA. In terms of biological role, formation of pseudouridine at positions 38, 39 and 40 in the anticodon stem and loop of transfer RNAs. The polypeptide is tRNA pseudouridine synthase A (Nostoc sp. (strain PCC 7120 / SAG 25.82 / UTEX 2576)).